Here is a 390-residue protein sequence, read N- to C-terminus: NADH-quinone oxidoreductase subunit D (390 aa).

It belongs to the complex I 49 kDa subunit family. In terms of assembly, NDH-1 is composed of 14 different subunits. Subunits NuoB, C, D, E, F, and G constitute the peripheral sector of the complex.

It localises to the cell inner membrane. It carries out the reaction a quinone + NADH + 5 H(+)(in) = a quinol + NAD(+) + 4 H(+)(out). Functionally, NDH-1 shuttles electrons from NADH, via FMN and iron-sulfur (Fe-S) centers, to quinones in the respiratory chain. The immediate electron acceptor for the enzyme in this species is believed to be ubiquinone. Couples the redox reaction to proton translocation (for every two electrons transferred, four hydrogen ions are translocated across the cytoplasmic membrane), and thus conserves the redox energy in a proton gradient. The polypeptide is NADH-quinone oxidoreductase subunit D (Geobacter sulfurreducens (strain ATCC 51573 / DSM 12127 / PCA)).